The following is a 185-amino-acid chain: Guanosine deaminase (185 aa).

One can recognise a CMP/dCMP-type deaminase domain in the interval 28 to 142; sequence DSDHKFLTQA…AAIAIGFDDF (115 aa). H80 is a binding site for Zn(2+). The active-site Proton donor is the E82. Zn(2+) contacts are provided by C110 and C113.

It belongs to the cytidine and deoxycytidylate deaminase family. Expressed in roots, leaves, flowers and siliques.

The protein localises to the cytoplasm. It is found in the nucleus. It carries out the reaction guanosine + H2O + H(+) = xanthosine + NH4(+). Catalyzes the hydrolytic deamination of guanosine, producing xanthosine and ammonia. Deaminates exclusively guanosine and 2'-deoxyguanosine but no other aminated purines, pyrimidines, or pterines. Deamination of guanosine by GSDA is the only source of xanthosine production in Arabidopsis. The sequence is that of Guanosine deaminase from Arabidopsis thaliana (Mouse-ear cress).